We begin with the raw amino-acid sequence, 292 residues long: Early E4 34 kDa protein (292 aa).

Belongs to the adenoviridae E4 30 to 34 kDa protein family. As to quaternary structure, interacts with E1B-55k.

The protein resides in the host nucleus. It is found in the host cytoplasm. Functionally, plays a major role to prevent cellular inhibition of viral genome replication by nuclear bodies. Assembles an SCF-like E3 ubiquitin ligase complex based on the cellular proteins ELOB, ELOC, CUL5 and RBX1, in cooperation with viral E1B-55K. This viral RING-type ligase ubiquitinates cellular substrates prior to proteasomal degradation: p53/TP53, LIG4, MRE11-RAD50-NBS1 (MRN) complex, ITGA3, DAXX and BLM. The chain is Early E4 34 kDa protein from Human adenovirus D serotype 9 (HAdV-9).